We begin with the raw amino-acid sequence, 414 residues long: WW domain-containing oxidoreductase (414 aa).

A disordered region spans residues 1–23; the sequence is MAALRYAGLDDTDSEDELPPGWE. T12 carries the post-translational modification Phosphothreonine. Phosphoserine is present on S14. The WW 1 domain occupies 16-49; it reads DELPPGWEERTTKDGWVYYANHTEEKTQWEHPKT. Position 33 is a phosphotyrosine (Y33). The Nuclear localization signal signature appears at 50–55; sequence GKRKRV. The WW 2 domain maps to 57 to 90; that stretch reads GDLPYGWEQETDENGQVFFVDHINKRTTYLDPRL. Residues 125-414 form an interaction with MAPT region; sequence KVVVVTGANS…IQERLGSQSG (290 aa). 131-137 is an NADP(+) binding site; the sequence is GANSGIG. The interval 209-273 is mediates targeting to the mitochondria; that stretch reads CNAATFALPW…RFTDINDSLG (65 aa). Residue S260 coordinates substrate. The residue at position 287 (Y287) is a Phosphotyrosine; by TNK2. Residue Y293 is the Proton acceptor of the active site.

It belongs to the short-chain dehydrogenases/reductases (SDR) family. In terms of assembly, interacts with TP53, p73/TP73 and MAPK8. Interacts with MAPT/TAU, RUNX2 and HYAL2. Forms a ternary complex with TP53 and MDM2. Interacts with ERBB4, LITAF and WBP1. Interacts with DVL1, DVL2 and DVL3. May interact with FAM189B and SCOTIN. Interacts with TNK2. Interacts with TMEM207. Interacts (via WW domain) with VOPP1. Post-translationally, phosphorylated upon genotoxic stress. Phosphorylation of Tyr-33 regulates interaction with TP53, TP73 and MAPK8. May also regulate proapoptotic activity. Phosphorylation by TNK2 is associated with polyubiquitination and degradation. In terms of processing, ubiquitinated when phosphorylated by TNK2, leading to its degradation. Widely expressed. Strongly expressed in testis, prostate, and ovary. Overexpressed in cancer cell lines. Isoform 5 and isoform 6 may only be expressed in tumor cell lines.

Its subcellular location is the cytoplasm. The protein resides in the nucleus. It is found in the mitochondrion. The protein localises to the golgi apparatus. It localises to the lysosome. Putative oxidoreductase. Acts as a tumor suppressor and plays a role in apoptosis. Required for normal bone development. May function synergistically with p53/TP53 to control genotoxic stress-induced cell death. Plays a role in TGFB1 signaling and TGFB1-mediated cell death. May also play a role in tumor necrosis factor (TNF)-mediated cell death. Inhibits Wnt signaling, probably by sequestering DVL2 in the cytoplasm. The polypeptide is WW domain-containing oxidoreductase (WWOX) (Homo sapiens (Human)).